Reading from the N-terminus, the 388-residue chain is Flap endonuclease 1 (388 aa).

Positions 1 to 105 are N-domain; that stretch reads MGIKNLTSLI…GELAKRYARR (105 aa). Residue Asp-34 participates in Mg(2+) binding. Arg-71 is a binding site for DNA. Mg(2+) contacts are provided by Asp-87, Glu-159, Glu-161, Asp-180, and Asp-182. The segment at 123–254 is I-domain; that stretch reads DVQKFQKRTI…KKSFDMITKH (132 aa). Glu-159 contacts DNA. Gly-232 and Asp-234 together coordinate DNA. Residue Asp-234 participates in Mg(2+) binding. Residues 338–346 are interaction with PCNA; that stretch reads VQTRIDTFF. Residues 349 to 388 form a disordered region; sequence IKRPRDEDAGSAKKKQKTVAKPGAAGSKKKPAAKKAAGKK. A compositionally biased stretch (basic residues) spans 375–388; it reads SKKKPAAKKAAGKK.

Belongs to the XPG/RAD2 endonuclease family. FEN1 subfamily. Interacts with PCNA. Three molecules of repG bind to one PCNA trimer with each molecule binding to one PCNA monomer. PCNA stimulates the nuclease activity without altering cleavage specificity. It depends on Mg(2+) as a cofactor. Phosphorylated. Phosphorylation upon DNA damage induces relocalization to the nuclear plasma.

It localises to the nucleus. The protein resides in the nucleolus. It is found in the nucleoplasm. The protein localises to the mitochondrion. Its function is as follows. Structure-specific nuclease with 5'-flap endonuclease and 5'-3' exonuclease activities involved in DNA replication and repair. During DNA replication, cleaves the 5'-overhanging flap structure that is generated by displacement synthesis when DNA polymerase encounters the 5'-end of a downstream Okazaki fragment. It enters the flap from the 5'-end and then tracks to cleave the flap base, leaving a nick for ligation. Also involved in the long patch base excision repair (LP-BER) pathway, by cleaving within the apurinic/apyrimidinic (AP) site-terminated flap. Acts as a genome stabilization factor that prevents flaps from equilibrating into structures that lead to duplications and deletions. Also possesses 5'-3' exonuclease activity on nicked or gapped double-stranded DNA, and exhibits RNase H activity. Also involved in replication and repair of rDNA and in repairing mitochondrial DNA. The chain is Flap endonuclease 1 from Heterostelium pallidum (strain ATCC 26659 / Pp 5 / PN500) (Cellular slime mold).